The sequence spans 148 residues: 3-dehydroquinate dehydratase (148 aa).

Y24 functions as the Proton acceptor in the catalytic mechanism. Substrate-binding residues include N75, H81, and D88. The active-site Proton donor is the H101. Substrate contacts are provided by residues 102–103 (LS) and R112.

Belongs to the type-II 3-dehydroquinase family. Homododecamer.

The enzyme catalyses 3-dehydroquinate = 3-dehydroshikimate + H2O. Its pathway is metabolic intermediate biosynthesis; chorismate biosynthesis; chorismate from D-erythrose 4-phosphate and phosphoenolpyruvate: step 3/7. Catalyzes a trans-dehydration via an enolate intermediate. The sequence is that of 3-dehydroquinate dehydratase from Bartonella henselae (strain ATCC 49882 / DSM 28221 / CCUG 30454 / Houston 1) (Rochalimaea henselae).